Reading from the N-terminus, the 546-residue chain is Arginine--tRNA ligase (546 aa).

Positions 117-127 (ANPTGPLHIGR) match the 'HIGH' region motif.

Belongs to the class-I aminoacyl-tRNA synthetase family.

The protein localises to the cytoplasm. It carries out the reaction tRNA(Arg) + L-arginine + ATP = L-arginyl-tRNA(Arg) + AMP + diphosphate. The chain is Arginine--tRNA ligase from Thermoplasma acidophilum (strain ATCC 25905 / DSM 1728 / JCM 9062 / NBRC 15155 / AMRC-C165).